The chain runs to 292 residues: N-acetylneuraminate lyase (292 aa).

Aceneuramate is bound by residues S47 and T48. Y136 acts as the Proton donor in catalysis. K164 serves as the catalytic Schiff-base intermediate with substrate. The aceneuramate site is built by T166, G188, D190, E191, and S207.

It belongs to the DapA family. NanA subfamily. As to quaternary structure, homotetramer.

Its subcellular location is the cytoplasm. The catalysed reaction is aceneuramate = aldehydo-N-acetyl-D-mannosamine + pyruvate. The protein operates within amino-sugar metabolism; N-acetylneuraminate degradation; D-fructose 6-phosphate from N-acetylneuraminate: step 1/5. Catalyzes the reversible aldol cleavage of N-acetylneuraminic acid (sialic acid; Neu5Ac) to form pyruvate and N-acetylmannosamine (ManNAc) via a Schiff base intermediate. The chain is N-acetylneuraminate lyase from Histophilus somni (strain 129Pt) (Haemophilus somnus).